The primary structure comprises 141 residues: Glutamyl-tRNA(Gln) amidotransferase subunit C, chloroplastic/mitochondrial (141 aa).

The protein belongs to the GatC family. As to quaternary structure, subunit of the heterotrimeric GatCAB amidotransferase (AdT) complex, composed of A, B and C subunits.

The protein resides in the mitochondrion. It localises to the plastid. The protein localises to the chloroplast. The catalysed reaction is L-glutamyl-tRNA(Gln) + L-glutamine + ATP + H2O = L-glutaminyl-tRNA(Gln) + L-glutamate + ADP + phosphate + H(+). Functionally, allows the formation of correctly charged Gln-tRNA(Gln) through the transamidation of misacylated Glu-tRNA(Gln) in chloroplasts and mitochondria. The reaction takes place in the presence of glutamine and ATP through an activated gamma-phospho-Glu-tRNA(Gln). The polypeptide is Glutamyl-tRNA(Gln) amidotransferase subunit C, chloroplastic/mitochondrial (Populus trichocarpa (Western balsam poplar)).